A 145-amino-acid polypeptide reads, in one-letter code: Type II secretion system core protein G (145 aa).

Positions 1–9 are cleaved as a propeptide — leader sequence; that stretch reads MRATDKQRG. F10 bears the N-methylphenylalanine mark. The helical transmembrane segment at 10 to 30 threads the bilayer; that stretch reads FTLLEIMVVIVIIGVLASLVV. The interval 123–145 is disordered; the sequence is AGPDGEMGTEDDITNWGLSKKKK.

The protein belongs to the GSP G family. In terms of assembly, type II secretion system is composed of four main components: the outer membrane complex, the inner membrane complex, the cytoplasmic secretion ATPase and the periplasm-spanning pseudopilus. Forms homomultimers. In terms of processing, cleaved by the prepilin peptidase. Post-translationally, methylated by prepilin peptidase at the amino group of the N-terminal phenylalanine once the leader sequence is cleaved.

It is found in the cell inner membrane. Functionally, core component of the type II secretion system required for the energy-dependent secretion of extracellular factors such as proteases and toxins from the periplasm. Pseudopilin (pilin-like) protein that polymerizes to form the pseudopilus. Further polymerization triggers pseudopilus growth. This Escherichia coli (strain K12) protein is Type II secretion system core protein G (gspG).